Reading from the N-terminus, the 37-residue chain is Large ribosomal subunit protein bL36c (37 aa).

The protein belongs to the bacterial ribosomal protein bL36 family.

Its subcellular location is the plastid. It localises to the chloroplast. The polypeptide is Large ribosomal subunit protein bL36c (rpl36) (Pisum sativum (Garden pea)).